Here is a 1383-residue protein sequence, read N- to C-terminus: DNA-directed RNA polymerase subunit beta (1383 aa).

This sequence belongs to the RNA polymerase beta chain family. In terms of assembly, the RNAP catalytic core consists of 2 alpha, 1 beta, 1 beta' and 1 omega subunit. When a sigma factor is associated with the core the holoenzyme is formed, which can initiate transcription.

The catalysed reaction is RNA(n) + a ribonucleoside 5'-triphosphate = RNA(n+1) + diphosphate. Its function is as follows. DNA-dependent RNA polymerase catalyzes the transcription of DNA into RNA using the four ribonucleoside triphosphates as substrates. This Bartonella bacilliformis (strain ATCC 35685 / KC583 / Herrer 020/F12,63) protein is DNA-directed RNA polymerase subunit beta.